Reading from the N-terminus, the 414-residue chain is 3-phosphoshikimate 1-carboxyvinyltransferase (414 aa).

Residues Lys-20, Ser-21, and Arg-25 each contribute to the 3-phosphoshikimate site. Lys-20 provides a ligand contact to phosphoenolpyruvate. Residues Gly-88 and Arg-116 each contribute to the phosphoenolpyruvate site. Residues Thr-157, Ser-158, Gln-159, Ser-183, Asp-297, and Lys-324 each contribute to the 3-phosphoshikimate site. Gln-159 contributes to the phosphoenolpyruvate binding site. Asp-297 functions as the Proton acceptor in the catalytic mechanism. Positions 328, 369, and 395 each coordinate phosphoenolpyruvate.

It belongs to the EPSP synthase family. In terms of assembly, monomer.

The protein localises to the cytoplasm. It catalyses the reaction 3-phosphoshikimate + phosphoenolpyruvate = 5-O-(1-carboxyvinyl)-3-phosphoshikimate + phosphate. It functions in the pathway metabolic intermediate biosynthesis; chorismate biosynthesis. In terms of biological role, catalyzes the transfer of the enolpyruvyl moiety of phosphoenolpyruvate (PEP) to the 5-hydroxyl of shikimate-3-phosphate (S3P) to produce enolpyruvyl shikimate-3-phosphate and inorganic phosphate. The polypeptide is 3-phosphoshikimate 1-carboxyvinyltransferase (Caldivirga maquilingensis (strain ATCC 700844 / DSM 13496 / JCM 10307 / IC-167)).